The following is a 394-amino-acid chain: S-adenosylmethionine synthase (394 aa).

H18 lines the ATP pocket. D20 serves as a coordination point for Mg(2+). Residue E46 participates in K(+) binding. L-methionine contacts are provided by E59 and Q104. Residues 104–114 (QSPDIAQGVDA) form a flexible loop region. ATP contacts are provided by residues 174-176 (DCK), 240-241 (KF), D249, 255-256 (RK), A272, and K276. Residue D249 coordinates L-methionine. L-methionine is bound at residue K280.

This sequence belongs to the AdoMet synthase family. As to quaternary structure, homotetramer; dimer of dimers. Requires Mg(2+) as cofactor. The cofactor is K(+).

It is found in the cytoplasm. The catalysed reaction is L-methionine + ATP + H2O = S-adenosyl-L-methionine + phosphate + diphosphate. It participates in amino-acid biosynthesis; S-adenosyl-L-methionine biosynthesis; S-adenosyl-L-methionine from L-methionine: step 1/1. Its function is as follows. Catalyzes the formation of S-adenosylmethionine (AdoMet) from methionine and ATP. The overall synthetic reaction is composed of two sequential steps, AdoMet formation and the subsequent tripolyphosphate hydrolysis which occurs prior to release of AdoMet from the enzyme. The protein is S-adenosylmethionine synthase of Akkermansia muciniphila (strain ATCC BAA-835 / DSM 22959 / JCM 33894 / BCRC 81048 / CCUG 64013 / CIP 107961 / Muc).